A 273-amino-acid polypeptide reads, in one-letter code: Probable membrane transporter protein YunE (273 aa).

8 helical membrane-spanning segments follow: residues 3 to 23 (FVILVVLGLIAGTVGSLIGLG), 50 to 70 (AIGTSLLVIIFTGLSSTLAYI), 81 to 101 (LIFFIGSGPGSMIGAYVSKLF), 105 to 125 (SFSVWFGIFMILISLSLMLKA), 157 to 177 (VGIAIAFVVGFLGGLFGIGGG), 185 to 205 (MLLFLFPPKVAVATSMFIIFL), 222 to 242 (WLYALALVPGAWFGGKLGAAI), and 251 to 271 (IVMIMRIVLILIGCQLIYEGI).

The protein belongs to the 4-toluene sulfonate uptake permease (TSUP) (TC 2.A.102) family.

The protein localises to the cell membrane. The sequence is that of Probable membrane transporter protein YunE (yunE) from Bacillus subtilis (strain 168).